We begin with the raw amino-acid sequence, 367 residues long: Cytochrome b (367 aa).

The next 4 membrane-spanning stretches (helical) occupy residues F25–I45, W69–I90, W105–L125, and F170–I190. Positions 75 and 89 each coordinate heme b. Heme b-binding residues include H174 and H188. An a ubiquinone-binding site is contributed by H193. 4 helical membrane-spanning segments follow: residues Y218 to T238, L280 to H300, L312 to T332, and F339 to P358.

It belongs to the cytochrome b family. As to quaternary structure, the cytochrome bc1 complex contains 3 respiratory subunits (MT-CYB, CYC1 and UQCRFS1), 2 core proteins (UQCRC1 and UQCRC2) and probably 6 low-molecular weight proteins. The cofactor is heme b.

Its subcellular location is the mitochondrion inner membrane. Its function is as follows. Component of the ubiquinol-cytochrome c reductase complex (complex III or cytochrome b-c1 complex) that is part of the mitochondrial respiratory chain. The b-c1 complex mediates electron transfer from ubiquinol to cytochrome c. Contributes to the generation of a proton gradient across the mitochondrial membrane that is then used for ATP synthesis. The chain is Cytochrome b (MT-CYB) from Austrelaps superbus (Lowland copperhead snake).